The chain runs to 229 residues: Predicted GPI-anchored protein 19 (229 aa).

A signal peptide spans 1–20; the sequence is MFSTTSIVLWFTILLPVTLP. The disordered stretch occupies residues 63-92; that stretch reads DNEQVLRKSKKKKKTTSTGTPGNENTTDFA. Residues 81-92 show a composition bias toward polar residues; it reads GTPGNENTTDFA. Residues asparagine 87, asparagine 184, and asparagine 189 are each glycosylated (N-linked (GlcNAc...) asparagine). Glycine 208 is lipidated: GPI-anchor amidated glycine. The propeptide at 209–229 is removed in mature form; the sequence is FGSLIPYNSFYLYILLFCIIF.

It is found in the cell membrane. Functionally, predicted GPI-anchored protein which may have a role during host infection. In Candida albicans (strain SC5314 / ATCC MYA-2876) (Yeast), this protein is Predicted GPI-anchored protein 19 (PGA19).